We begin with the raw amino-acid sequence, 73 residues long: Putative antitoxin M1627_0365 (73 aa).

The protein belongs to the UPF0330 family.

Functionally, possibly the antitoxin component of a type II toxin-antitoxin (TA) system. This is Putative antitoxin M1627_0365 from Saccharolobus islandicus (strain M.16.27) (Sulfolobus islandicus).